The sequence spans 180 residues: Transcription repressor NadR (180 aa).

Homodimer.

Its function is as follows. In the presence of nicotinic acid represses transcription of the nadBCA and nifS-nadR operons. Also binds to DNA upstream of the niaP gene, probably regulating it as well. May bind nicotinic acid. The polypeptide is Transcription repressor NadR (nadR) (Bacillus subtilis (strain 168)).